The chain runs to 71 residues: MPEKDTGGQHRATRRTEEHDETIDEATATSDVQERREKLDADVDAILDEIDDVLEENAEEFVRSYIQKGGE.

Over residues 1–18 the composition is skewed to basic and acidic residues; that stretch reads MPEKDTGGQHRATRRTEE. Residues 1–36 are disordered; the sequence is MPEKDTGGQHRATRRTEEHDETIDEATATSDVQERR. The tract at residues 27-65 is ARC ATPase binding; sequence TATSDVQERREKLDADVDAILDEIDDVLEENAEEFVRSY. Residues 30 to 59 adopt a coiled-coil conformation; that stretch reads SDVQERREKLDADVDAILDEIDDVLEENAE. E71 is covalently cross-linked (Isoglutamyl lysine isopeptide (Glu-Lys) (interchain with K-? in acceptor proteins)).

It belongs to the prokaryotic ubiquitin-like protein family. In terms of assembly, strongly interacts with the proteasome-associated ATPase ARC through a hydrophobic interface; the interacting region of Pup lies in its C-terminal half. There is one Pup binding site per ARC hexamer ring.

It functions in the pathway protein degradation; proteasomal Pup-dependent pathway. Functionally, protein modifier that is covalently attached to lysine residues of substrate proteins, thereby targeting them for proteasomal degradation. The tagging system is termed pupylation. In Acidothermus cellulolyticus (strain ATCC 43068 / DSM 8971 / 11B), this protein is Prokaryotic ubiquitin-like protein Pup.